The sequence spans 148 residues: 3-dehydroquinate dehydratase (148 aa).

Residue tyrosine 22 is the Proton acceptor of the active site. Residues asparagine 73, histidine 79, and aspartate 86 each coordinate substrate. Histidine 99 functions as the Proton donor in the catalytic mechanism. Substrate is bound by residues 100–101 (LS) and arginine 110.

Belongs to the type-II 3-dehydroquinase family. Homododecamer.

It catalyses the reaction 3-dehydroquinate = 3-dehydroshikimate + H2O. The protein operates within metabolic intermediate biosynthesis; chorismate biosynthesis; chorismate from D-erythrose 4-phosphate and phosphoenolpyruvate: step 3/7. Functionally, catalyzes a trans-dehydration via an enolate intermediate. The protein is 3-dehydroquinate dehydratase of Jannaschia sp. (strain CCS1).